The chain runs to 33 residues: Imperacalcin (33 aa).

Cystine bridges form between Cys-3-Cys-17, Cys-10-Cys-21, and Cys-16-Cys-32. Important for stimulation of [3H]ryanodine binding to RYR1 stretches follow at residues 8 to 9 (KR) and 19 to 20 (KK). The interval 22-24 (KRR) is essential for stimulation of [3H]ryanodine binding to RYR1. An important for stimulation of [3H]ryanodine binding to RYR1 region spans residues 25-27 (GTN).

It belongs to the scorpion calcin family. Expressed by the venom gland.

Its subcellular location is the secreted. In terms of biological role, this toxin affects the activity of ryanodine receptors 1, 2 and 3 (RyR1, RyR2 and RyR3). At lower concentrations the toxin increases full openings of the RyRs, and at higher concentrations it inhibits full openings and induces openings to subconductance levels (30% of the full conductance state) and reduces the number of full conductance openings. The different actions may be attributed to the toxins binding at different sites on the RyRs, with binding at a high-affinity site mediating the increase in full openings and the induction of subconductance states evoked upon binding to a lower-affinity site. Furthermore, it triggers calcium release from sarcoplasmic vesicles (11.7 nM are enough to induce a sharp release, and 70% of the total calcium is released after toxin (100 nM) addition) probably by acting as a cell-penetrating peptide (CPP). In addition, it has been shown to dose-dependently stimulate ryanodine binding to RyR1 (EC(50)=8.7 nM). It also augments the bell-shaped calcium-[3H]ryanodine binding curve that is maximal at about 10 uM calcium concentration. It binds a different site as ryanodine. It acts synergistically with caffeine. In vivo, intracerebroventricular injection into mice induces neurotoxic symptoms, followed by death. The protein is Imperacalcin of Pandinus imperator (Emperor scorpion).